A 352-amino-acid chain; its full sequence is UDP-N-acetylglucosamine--N-acetylmuramyl-(pentapeptide) pyrophosphoryl-undecaprenol N-acetylglucosamine transferase 2 (352 aa).

UDP-N-acetyl-alpha-D-glucosamine contacts are provided by residues 11–13 (SAG), R164, S194, and Q289.

The protein belongs to the glycosyltransferase 28 family. MurG subfamily.

It is found in the cell membrane. The enzyme catalyses di-trans,octa-cis-undecaprenyl diphospho-N-acetyl-alpha-D-muramoyl-L-alanyl-D-glutamyl-meso-2,6-diaminopimeloyl-D-alanyl-D-alanine + UDP-N-acetyl-alpha-D-glucosamine = di-trans,octa-cis-undecaprenyl diphospho-[N-acetyl-alpha-D-glucosaminyl-(1-&gt;4)]-N-acetyl-alpha-D-muramoyl-L-alanyl-D-glutamyl-meso-2,6-diaminopimeloyl-D-alanyl-D-alanine + UDP + H(+). It functions in the pathway cell wall biogenesis; peptidoglycan biosynthesis. Functionally, cell wall formation. Catalyzes the transfer of a GlcNAc subunit on undecaprenyl-pyrophosphoryl-MurNAc-pentapeptide (lipid intermediate I) to form undecaprenyl-pyrophosphoryl-MurNAc-(pentapeptide)GlcNAc (lipid intermediate II). The polypeptide is UDP-N-acetylglucosamine--N-acetylmuramyl-(pentapeptide) pyrophosphoryl-undecaprenol N-acetylglucosamine transferase 2 (Bacillus cereus (strain ATCC 10987 / NRS 248)).